The primary structure comprises 211 residues: ATP phosphoribosyltransferase (211 aa).

It belongs to the ATP phosphoribosyltransferase family. Short subfamily. As to quaternary structure, heteromultimer composed of HisG and HisZ subunits.

The protein localises to the cytoplasm. It carries out the reaction 1-(5-phospho-beta-D-ribosyl)-ATP + diphosphate = 5-phospho-alpha-D-ribose 1-diphosphate + ATP. Its pathway is amino-acid biosynthesis; L-histidine biosynthesis; L-histidine from 5-phospho-alpha-D-ribose 1-diphosphate: step 1/9. Functionally, catalyzes the condensation of ATP and 5-phosphoribose 1-diphosphate to form N'-(5'-phosphoribosyl)-ATP (PR-ATP). Has a crucial role in the pathway because the rate of histidine biosynthesis seems to be controlled primarily by regulation of HisG enzymatic activity. This chain is ATP phosphoribosyltransferase, found in Pseudomonas aeruginosa (strain UCBPP-PA14).